A 432-amino-acid polypeptide reads, in one-letter code: Glutamine synthetase, chloroplastic (432 aa).

Residues 79–159 (IIAEYIWIGG…VICDTYTPQG (81 aa)) enclose the GS beta-grasp domain. One can recognise a GS catalytic domain in the interval 166–432 (KRHKAAQIFS…LAAQKLSLNV (267 aa)).

It belongs to the glutamine synthetase family. In terms of assembly, homooctamer.

It localises to the plastid. It is found in the chloroplast. The catalysed reaction is L-glutamate + NH4(+) + ATP = L-glutamine + ADP + phosphate + H(+). Its function is as follows. The light-modulated chloroplast enzyme, encoded by a nuclear gene and expressed primarily in leaves, is responsible for the reassimilation of the ammonia generated by photorespiration. This chain is Glutamine synthetase, chloroplastic (GLN2), found in Daucus carota (Wild carrot).